A 96-amino-acid chain; its full sequence is RNA-binding protein Hfq (96 aa).

The 60-residue stretch at 9–68 (DPFLNALRRERVPVSIYLVNGIKLQGQIESFDQFVILLKNTVSQMVYKHAISTVVPSRPV) folds into the Sm domain. Residues 64–96 (PSRPVSHHSNTGTNQAGTNYSGGNATQQDDVAE) are disordered. Residues 70 to 96 (HHSNTGTNQAGTNYSGGNATQQDDVAE) are compositionally biased toward polar residues.

It belongs to the Hfq family. In terms of assembly, homohexamer.

In terms of biological role, RNA chaperone that binds small regulatory RNA (sRNAs) and mRNAs to facilitate mRNA translational regulation in response to envelope stress, environmental stress and changes in metabolite concentrations. Also binds with high specificity to tRNAs. This Proteus mirabilis (strain HI4320) protein is RNA-binding protein Hfq.